Here is a 196-residue protein sequence, read N- to C-terminus: MATNYSANQYEKPFSPKYLQNWSLAKPTKERISSHEGYTQIIANDRGHLLPSVPRSKASPWGSFMGTWQMPLKVPPARATLTSRTAAGAASLTRWIQKNPDLLKASNGLRPEIFGKPHDPDSQKKLRKSITKTVQQAPSPTIIPSSPASNLSSPDQLQSSHPSAGHTPGPQSPLNSPKCPPGSPCLPHAGRNLAEV.

A disordered region spans residues 107–196 (NGLRPEIFGK…PHAGRNLAEV (90 aa)). Residues 113 to 124 (IFGKPHDPDSQK) show a composition bias toward basic and acidic residues. Residues 137–149 (APSPTIIPSSPAS) are compositionally biased toward low complexity. The span at 150–162 (NLSSPDQLQSSHP) shows a compositional bias: polar residues.

Belongs to the Flattop family. In terms of assembly, microtubule inner protein component of sperm flagellar doublet microtubules. Interacts with DLG3. As to expression, expressed in trachea multiciliated cells.

It is found in the cytoplasm. It localises to the cytoskeleton. Its subcellular location is the cilium basal body. The protein resides in the cell projection. The protein localises to the cilium. It is found in the apical cell membrane. It localises to the cilium axoneme. Its subcellular location is the flagellum axoneme. Its function is as follows. Microtubule inner protein (MIP) part of the dynein-decorated doublet microtubules (DMTs) in cilia axoneme. Acts as a regulator of cilium basal body docking and positioning in mono- and multiciliated cells. Regulates basal body docking and cilia formation in multiciliated lung cells. Regulates kinocilium positioning and stereocilia bundle morphogenesis in the inner ear. This is Protein Flattop from Bos taurus (Bovine).